A 123-amino-acid polypeptide reads, in one-letter code: Large ribosomal subunit protein uL14 (123 aa).

Belongs to the universal ribosomal protein uL14 family. In terms of assembly, part of the 50S ribosomal subunit. Forms a cluster with proteins L3 and L19. In the 70S ribosome, L14 and L19 interact and together make contacts with the 16S rRNA in bridges B5 and B8.

Functionally, binds to 23S rRNA. Forms part of two intersubunit bridges in the 70S ribosome. This chain is Large ribosomal subunit protein uL14, found in Corynebacterium jeikeium (strain K411).